The primary structure comprises 145 residues: Large ribosomal subunit protein uL11 (145 aa).

The protein belongs to the universal ribosomal protein uL11 family. Part of the ribosomal stalk of the 50S ribosomal subunit. Interacts with L10 and the large rRNA to form the base of the stalk. L10 forms an elongated spine to which L12 dimers bind in a sequential fashion forming a multimeric L10(L12)X complex. Post-translationally, one or more lysine residues are methylated.

Functionally, forms part of the ribosomal stalk which helps the ribosome interact with GTP-bound translation factors. This Porphyromonas gingivalis (strain ATCC 33277 / DSM 20709 / CIP 103683 / JCM 12257 / NCTC 11834 / 2561) protein is Large ribosomal subunit protein uL11.